The primary structure comprises 444 residues: 23S rRNA (uracil(1939)-C(5))-methyltransferase RlmD (444 aa).

In terms of domain architecture, TRAM spans 5–67 (RSRIDRTPFQ…RHFDEARTVE (63 aa)). Positions 80, 86, 89, and 168 each coordinate [4Fe-4S] cluster. S-adenosyl-L-methionine contacts are provided by glutamine 276, phenylalanine 305, asparagine 310, glutamate 326, aspartate 353, and aspartate 374. Cysteine 400 (nucleophile) is an active-site residue.

Belongs to the class I-like SAM-binding methyltransferase superfamily. RNA M5U methyltransferase family. RlmD subfamily.

The catalysed reaction is uridine(1939) in 23S rRNA + S-adenosyl-L-methionine = 5-methyluridine(1939) in 23S rRNA + S-adenosyl-L-homocysteine + H(+). Its function is as follows. Catalyzes the formation of 5-methyl-uridine at position 1939 (m5U1939) in 23S rRNA. This is 23S rRNA (uracil(1939)-C(5))-methyltransferase RlmD from Stenotrophomonas maltophilia (strain K279a).